Consider the following 239-residue polypeptide: DnaA regulatory inactivator Hda (239 aa).

The protein belongs to the DnaA family. HdA subfamily. As to quaternary structure, the active form seems to be an ADP-bound monomer. Forms the RIDA complex (regulatory inactivation of DnaA) of ATP-DnaA, ADP-Hda and the DNA-loaded beta sliding clamp (dnaN).

Mediates the interaction of DNA replication initiator protein DnaA with DNA polymerase subunit beta sliding clamp (dnaN). Stimulates hydrolysis of ATP-DnaA to ADP-DnaA, rendering DnaA inactive for reinitiation, a process called regulatory inhibition of DnaA or RIDA. The polypeptide is DnaA regulatory inactivator Hda (Yersinia enterocolitica serotype O:8 / biotype 1B (strain NCTC 13174 / 8081)).